The sequence spans 212 residues: Adenylate kinase (212 aa).

Position 10–15 (10–15) interacts with ATP; the sequence is GAGKGT. The interval 30–59 is NMP; it reads STGDILREAMAQETELGQKAKSYIDAGELV. AMP contacts are provided by residues threonine 31, arginine 36, 57 to 59, 84 to 87, and glutamine 91; these read ELV and GYPR. The tract at residues 125–158 is LID; the sequence is RRRVHEETGETYHLDHDPPPEDVDPDLIVQRSDD. ATP-binding positions include arginine 126 and 135-136; that span reads TY. Residues arginine 155 and arginine 166 each contribute to the AMP site. Glycine 194 is a binding site for ATP.

This sequence belongs to the adenylate kinase family. As to quaternary structure, monomer.

The protein localises to the cytoplasm. It carries out the reaction AMP + ATP = 2 ADP. It participates in purine metabolism; AMP biosynthesis via salvage pathway; AMP from ADP: step 1/1. Functionally, catalyzes the reversible transfer of the terminal phosphate group between ATP and AMP. Plays an important role in cellular energy homeostasis and in adenine nucleotide metabolism. In Salinibacter ruber (strain DSM 13855 / M31), this protein is Adenylate kinase.